A 360-amino-acid polypeptide reads, in one-letter code: MSSSNLSSILRNSRIAQVPKPKGPLFSPDKKYVPTHQLIENKASTMHRQEWGMKSSIPSRSKSRYLIFDELDTQQRLTSFEAIGQYQWNRIRIQELGVVPERATAGNSFQTSADANAPSNPLFSGFSSRLSARTPLSSFFGLTSKSDAKQWKAAEKKVAALRPAFKKWLQDHHPHLIIHKDQMDPADFRKRAVEFITEIATRSSGAGGSWKVVGNGGLTYGLKGRLQQSPLGIKQNTVVEGRILQTNGMEKSVAAAGFVGNGMLGTNLRKVDYAMGDLVRTARFPFEVKQARLLENGRLLMDMSLIEPKNTARKYGYGAKENKNRTYIFQRGAVNERKISSEESAQQAEELLNILTNFEN.

Low complexity predominate over residues 1–15 (MSSSNLSSILRNSRI). Residues 1 to 31 (MSSSNLSSILRNSRIAQVPKPKGPLFSPDKK) form a disordered region.

The protein belongs to the bacterial ribosomal protein bS1 family. As to quaternary structure, component of the mitochondrial small ribosomal subunit.

The protein resides in the mitochondrion. Its function is as follows. Involved in mitochondrial genome encoded proteins translation. In Eremothecium gossypii (strain ATCC 10895 / CBS 109.51 / FGSC 9923 / NRRL Y-1056) (Yeast), this protein is Small ribosomal subunit protein bS1m (MRP51).